Consider the following 315-residue polypeptide: Lipoyl synthase (315 aa).

7 residues coordinate [4Fe-4S] cluster: cysteine 62, cysteine 67, cysteine 73, cysteine 88, cysteine 92, cysteine 95, and serine 302. Residues 73-291 enclose the Radical SAM core domain; sequence CFGHGTATFM…GELAKKLGFS (219 aa).

The protein belongs to the radical SAM superfamily. Lipoyl synthase family. [4Fe-4S] cluster is required as a cofactor.

It is found in the cytoplasm. It carries out the reaction [[Fe-S] cluster scaffold protein carrying a second [4Fe-4S](2+) cluster] + N(6)-octanoyl-L-lysyl-[protein] + 2 oxidized [2Fe-2S]-[ferredoxin] + 2 S-adenosyl-L-methionine + 4 H(+) = [[Fe-S] cluster scaffold protein] + N(6)-[(R)-dihydrolipoyl]-L-lysyl-[protein] + 4 Fe(3+) + 2 hydrogen sulfide + 2 5'-deoxyadenosine + 2 L-methionine + 2 reduced [2Fe-2S]-[ferredoxin]. The protein operates within protein modification; protein lipoylation via endogenous pathway; protein N(6)-(lipoyl)lysine from octanoyl-[acyl-carrier-protein]: step 2/2. Functionally, catalyzes the radical-mediated insertion of two sulfur atoms into the C-6 and C-8 positions of the octanoyl moiety bound to the lipoyl domains of lipoate-dependent enzymes, thereby converting the octanoylated domains into lipoylated derivatives. This chain is Lipoyl synthase, found in Coxiella burnetii (strain Dugway 5J108-111).